Reading from the N-terminus, the 303-residue chain is Shikimate kinase 1, chloroplastic (303 aa).

The transit peptide at Met-1–Ser-66 directs the protein to the chloroplast. Gly-109–Thr-116 lines the ATP pocket. Thr-116 lines the Mg(2+) pocket. The substrate site is built by Asp-134, Arg-159, and Gly-181. Arg-220 is a binding site for ATP.

Belongs to the shikimate kinase family. Homodimer. Mg(2+) is required as a cofactor.

It is found in the plastid. Its subcellular location is the chloroplast. The enzyme catalyses shikimate + ATP = 3-phosphoshikimate + ADP + H(+). It participates in metabolic intermediate biosynthesis; chorismate biosynthesis; chorismate from D-erythrose 4-phosphate and phosphoenolpyruvate: step 5/7. Catalyzes the specific phosphorylation of the 3-hydroxyl group of shikimic acid using ATP as a cosubstrate. In Arabidopsis thaliana (Mouse-ear cress), this protein is Shikimate kinase 1, chloroplastic (SK1).